Here is a 592-residue protein sequence, read N- to C-terminus: Frizzled-9 (592 aa).

Residues 1 to 23 (MAVPPLLRGALLLWQLLATGGAA) form the signal peptide. Residues 24–230 (LEIGRFDPER…EVFWSRRDKD (207 aa)) are Extracellular-facing. One can recognise an FZ domain in the interval 35–156 (RGPAPCQAME…NDPHALCMEA (122 aa)). Intrachain disulfides connect Cys40–Cys101, Cys48–Cys94, Cys85–Cys123, Cys112–Cys153, and Cys116–Cys140. The interval 59–173 (PNLLGHTSQG…PTEPHKGLGM (115 aa)) is required for Wnt-activated receptor activity. The chain crosses the membrane as a helical span at residues 231-251 (FALVWMAVWSALCFFSTAFTV). The Cytoplasmic portion of the chain corresponds to 252–267 (FTFLLEPHRFQYPERP). A helical membrane pass occupies residues 268-288 (IIFLSMCYNVYSLAFLIRAVA). The Extracellular portion of the chain corresponds to 289-314 (GAQSVACDQEAGALYVIQEGLENTGC). Residues 315–335 (TLVFLLLYYFGMASSLWWVVL) form a helical membrane-spanning segment. Residues 336 to 356 (TLTWFLAAGKKWGHEAIEAHG) are Cytoplasmic-facing. A helical transmembrane segment spans residues 357-377 (SYFHMAAWGLPALKTIVVLTL). Residues 378–401 (RKVAGDELTGLCYVASMDPAALTG) lie on the Extracellular side of the membrane. The helical transmembrane segment at 402 to 422 (FVLVPLSCYLVLGTSFLLTGF) threads the bilayer. Residues 423-448 (VALFHIRKIMKTGGTNTEKLEKLMVK) lie on the Cytoplasmic side of the membrane. A helical membrane pass occupies residues 449–469 (IGVFSILYTVPATCVIVCYVY). Over 470-509 (ERLNMDFWRLRATEQPCTAAAVPGGRRDCSLPGGSVPTVA) the chain is Extracellular. The helical transmembrane segment at 510–530 (VFMLKIFMSLVVGITSGVWVW) threads the bilayer. The Cytoplasmic segment spans residues 531-592 (SSKTFQTWQS…DPSLENPTHL (62 aa)). The Lys-Thr-X-X-X-Trp motif, mediates interaction with the PDZ domain of Dvl family members signature appears at 533 to 538 (KTFQTW). Positions 555 to 592 (ACRTPGGYGRGTHCHYKAPTVVLHMTKTDPSLENPTHL) are required for CTNNB1 accumulation and TCF transcription factor activity.

Belongs to the G-protein coupled receptor Fz/Smo family. Ubiquitinated by ZNRF3, leading to its degradation by the proteasome.

It localises to the cell membrane. In terms of biological role, receptor for WNT2 that is coupled to the beta-catenin canonical signaling pathway, which leads to the activation of disheveled proteins, inhibition of GSK-3 kinase, nuclear accumulation of beta-catenin and activation of Wnt target genes. Plays a role in neuromuscular junction (NMJ) assembly by negatively regulating the clustering of acetylcholine receptors (AChR) through the beta-catenin canonical signaling pathway. May play a role in neural progenitor cells (NPCs) viability through the beta-catenin canonical signaling pathway by negatively regulating cell cycle arrest leading to inhibition of neuron apoptotic process. During hippocampal development, regulates neuroblast proliferation and apoptotic cell death. Controls bone formation through non canonical Wnt signaling mediated via ISG15. Positively regulates bone regeneration through non canonical Wnt signaling. The sequence is that of Frizzled-9 from Rattus norvegicus (Rat).